Reading from the N-terminus, the 663-residue chain is Polyunsaturated fatty acid lipoxygenase ALOX12 (663 aa).

The PLAT domain occupies glycine 2–arginine 114. The Lipoxygenase domain maps to leucine 115–isoleucine 663. Residue serine 246 is modified to Phosphoserine. Residues histidine 360, histidine 365, histidine 540, asparagine 544, and isoleucine 663 each coordinate Fe cation.

The protein belongs to the lipoxygenase family. Fe cation serves as cofactor. Expressed in vascular smooth muscle cells.

The protein localises to the cytoplasm. Its subcellular location is the cytosol. It localises to the membrane. It carries out the reaction (5Z,8Z,11Z,14Z)-eicosatetraenoate + O2 = (12S)-hydroperoxy-(5Z,8Z,10E,14Z)-eicosatetraenoate. The enzyme catalyses (5Z,8Z,11Z,14Z)-eicosatetraenoate + O2 = (15S)-hydroperoxy-(5Z,8Z,11Z,13E)-eicosatetraenoate. It catalyses the reaction 2 leukotriene A4 + O2 + 2 H2O = 2 lipoxin A4. The catalysed reaction is 2 leukotriene A4 + O2 + 2 H2O = 2 lipoxin B4. It carries out the reaction (14S)-hydroperoxy-(4Z,7Z,10Z,12E,16Z,19Z)-docosahexaenoate = (13S,14S)-epoxy-(4Z,7Z,9E,11E,16Z,19Z)-docosahexaenoate + H2O. The enzyme catalyses N-(5Z,8Z,11Z,14Z)-eicosatetraenoyl-L-alanine + O2 = N-(15S)-hydroperoxy-(5Z,8Z,11Z,13E)-eicosatetraenoyl-alanine. It catalyses the reaction N-(5Z,8Z,11Z,14Z)-eicosatetraenoyl-L-alanine + O2 = N-(12S)-hydroperoxy-(5Z,8Z,10E,14Z)-eicosatetraenoyl-alanine. The catalysed reaction is N-(5Z,8Z,11Z,14Z)-eicosatetraenoyl-gamma-aminobutanoate + O2 = N-(15S)-hydroperoxy-(5Z,8Z,11Z,13E)-eicosatetraenoyl-gamma-aminobutanoate. It carries out the reaction N-(5Z,8Z,11Z,14Z)-eicosatetraenoyl-gamma-aminobutanoate + O2 = N-(12S)-hydroperoxy-(5Z,8Z,10E,14Z)-eicosatetraenoyl-gamma-aminobutanoate. The enzyme catalyses N-(5Z,8Z,11Z,14Z)-eicosatetraenoyl-glycine + O2 = N-(15S)-hydroperoxy-(5Z,8Z,11Z,13E)-eicosatetraenoyl-glycine. It catalyses the reaction N-(5Z,8Z,11Z,14Z)-eicosatetraenoyl-glycine + O2 = N-(12S)-hydroperoxy-(5Z,8Z,10E,14Z)-eicosatetraenoyl-glycine. The catalysed reaction is N-(5Z,8Z,11Z,14Z)-eicosatetraenoyl-taurine + O2 = N-(12S)-hydroperoxy-(5Z,8Z,10E,14Z)-eicosatetraenoyl-taurine. It carries out the reaction N-(5Z,8Z,11Z,14Z)-eicosatetraenoyl-taurine + O2 = N-(15S)-hydroperoxy-(5Z,8Z,11Z,13E)-eicosatetraenoyl-taurine. The enzyme catalyses (4Z,7Z,10Z,13Z,16Z,19Z)-docosahexaenoate + O2 = (14S)-hydroperoxy-(4Z,7Z,10Z,12E,16Z,19Z)-docosahexaenoate. It catalyses the reaction (7S)-hydroperoxy-(4Z,8E,10Z,13Z,16Z,19Z)-docosahexaenoate + O2 = (7S,14S)-dihydroperoxy-(4Z,8E,10Z,12E,16Z,19Z)-docosahexaenoate. The catalysed reaction is (7S)-hydroperoxy-(4Z,8E,10Z,13Z,16Z,19Z)-docosahexaenoate + O2 = (7S,17S)-dihydroperoxy-(4Z,8E,10Z,13Z,15E,19Z)-docosahexaenoate. It carries out the reaction (5Z,8Z,11Z,14Z,17Z)-eicosapentaenoate + O2 = (12S)-hydroperoxy-(5Z,8Z,10E,14Z,17Z)-eicosapentaenoate. The enzyme catalyses (8Z,11Z,14Z)-eicosatrienoate + O2 = (12S)-hydroperoxy-(8Z,10E,14Z)-eicosatrienoate. It catalyses the reaction (9Z,12Z)-octadecadienoate + O2 = (13S)-hydroperoxy-(9Z,11E)-octadecadienoate. The catalysed reaction is (5Z,8Z,11Z)-eicosatrienoate + O2 = (12S)-hydroperoxy-(5Z,8Z,10E)-eicosatrienoate. It carries out the reaction (14R,15S)-epoxy-(5Z,8Z,11Z)-eicosatrienoate + O2 = (12S)-hydroperoxy-(14R,15S)-epoxy-(5Z,8Z,10E)-eicosatrienoate. The enzyme catalyses (14S,15R)-epoxy-(5Z,8Z,11Z)-eicosatrienoate + O2 = (12S)-hydroperoxy-(14S,15R)-epoxy-(5Z,8Z,10E)-eicosatrienoate. It participates in lipid metabolism; hydroperoxy eicosatetraenoic acid biosynthesis. Its activity is regulated as follows. Activated by EGF. Arachidonic acid conversion is inhibited by (13S,14S)-epoxy-(4Z,7Z,9E,11E,16Z,19Z)-docosahexaenoate (13S,14S-epoxy-DHA). Arachidonate 12-lipoxygenase activity is decreased when PH decreases from 7.4 to 6. Functionally, catalyzes the regio and stereo-specific incorporation of molecular oxygen into free and esterified polyunsaturated fatty acids generating lipid hydroperoxides that can be further reduced to the corresponding hydroxy species. Mainly converts arachidonate ((5Z,8Z,11Z,14Z)-eicosatetraenoate) to the specific bioactive lipid (12S)-hydroperoxyeicosatetraenoate/(12S)-HPETE. Through the production of bioactive lipids like (12S)-HPETE it regulates different biological processes including platelet activation. It can also catalyze the epoxidation of double bonds of polyunsaturated fatty acids such as (14S)-hydroperoxy-docosahexaenoate/(14S)-HPDHA resulting in the formation of (13S,14S)-epoxy-DHA. Furthermore, it may participate in the sequential oxidations of DHA ((4Z,7Z,10Z,13Z,16Z,19Z)-docosahexaenoate) to generate specialized pro-resolving mediators (SPMs) like resolvin D5 ((7S,17S)-diHPDHA) and (7S,14S)-diHPDHA, that actively down-regulate the immune response and have anti-aggregation properties with platelets. An additional function involves a multistep process by which it transforms leukotriene A4/LTA4 into the bioactive lipids lipoxin A4/LXA4 and lipoxin B4/LXB4, both are vasoactive and LXA4 may regulate neutrophil function via occupancy of specific recognition sites. Can also peroxidize linoleate ((9Z,12Z)-octadecadienoate) to (13S)-hydroperoxyoctadecadienoate/ (13S-HPODE). Due to its role in regulating both the expression of the vascular endothelial growth factor (VEGF, an angiogenic factor involved in the survival and metastasis of solid tumors) and the expression of integrin beta-1 (known to affect tumor cell migration and proliferation), it can be regarded as protumorigenic. Important for cell survival, as it may play a role not only in proliferation but also in the prevention of apoptosis in vascular smooth muscle cells. The chain is Polyunsaturated fatty acid lipoxygenase ALOX12 from Homo sapiens (Human).